The chain runs to 315 residues: tRNA dimethylallyltransferase (315 aa).

Position 10–17 (10–17 (GPTATGKS)) interacts with ATP. Substrate is bound at residue 12 to 17 (TATGKS). Positions 35-38 (DSMQ) are interaction with substrate tRNA.

It belongs to the IPP transferase family. As to quaternary structure, monomer. The cofactor is Mg(2+).

It catalyses the reaction adenosine(37) in tRNA + dimethylallyl diphosphate = N(6)-dimethylallyladenosine(37) in tRNA + diphosphate. Catalyzes the transfer of a dimethylallyl group onto the adenine at position 37 in tRNAs that read codons beginning with uridine, leading to the formation of N6-(dimethylallyl)adenosine (i(6)A). In Caldanaerobacter subterraneus subsp. tengcongensis (strain DSM 15242 / JCM 11007 / NBRC 100824 / MB4) (Thermoanaerobacter tengcongensis), this protein is tRNA dimethylallyltransferase.